Here is a 243-residue protein sequence, read N- to C-terminus: Cyclin-dependent kinase 20 (243 aa).

Positions 4 to 243 (YCILGRIGEG…IHLSCRFLSV (240 aa)) constitute a Protein kinase domain. ATP contacts are provided by residues 10–18 (IGEGAHGIV) and lysine 33. Residue aspartate 127 is the Proton acceptor of the active site.

Belongs to the protein kinase superfamily. CMGC Ser/Thr protein kinase family. CDC2/CDKX subfamily. Monomer. Interacts with TBC1D32 and MAK.

The protein localises to the nucleus. It is found in the cytoplasm. Its subcellular location is the cell projection. The protein resides in the cilium. The catalysed reaction is L-seryl-[protein] + ATP = O-phospho-L-seryl-[protein] + ADP + H(+). It carries out the reaction L-threonyl-[protein] + ATP = O-phospho-L-threonyl-[protein] + ADP + H(+). Functionally, required for high-level Shh responses in the developing neural tube. Together with TBC1D32, controls the structure of the primary cilium by coordinating assembly of the ciliary membrane and axoneme, allowing GLI2 to be properly activated in response to SHH signaling. Involved in cell growth. Activates CDK2, a kinase involved in the control of the cell cycle, by phosphorylating residue 'Thr-160'. The protein is Cyclin-dependent kinase 20 (CDK20) of Macaca mulatta (Rhesus macaque).